We begin with the raw amino-acid sequence, 115 residues long: Nucleoid-associated protein PMN2A_1347 (115 aa).

The tract at residues 89–115 is disordered; that stretch reads STSTMKERMEDLTGGFKLNLPGMGEEN.

It belongs to the YbaB/EbfC family. Homodimer.

The protein localises to the cytoplasm. It is found in the nucleoid. In terms of biological role, binds to DNA and alters its conformation. May be involved in regulation of gene expression, nucleoid organization and DNA protection. The protein is Nucleoid-associated protein PMN2A_1347 of Prochlorococcus marinus (strain NATL2A).